A 310-amino-acid chain; its full sequence is MTAKIFIDGEHGTTGLQIRSRMADRRDVELLSIPQEQRRNAALREDLLNSADIAILCLPDDASKEAVSMLAGNNNVRIIDTSTAFRVAQDWTYGFAEMDKAQGDKIRSARCVANPGCYPTGAIALIRPLRAAGILPDGYPVSVNAVSGYSGGGKQLIAQMEDESHPEHLTVNNYVYGLNLKHKHVPEMKAHGLLDRAPLFSPSVGRFPQGMIVQVPLFLEDLADGATVESIHAALSAHYAGQDIVKVVALEDSAKLGRVDAEELVGQDTMKLFAFGNPGTGHVNLVAVLDNLGKGASGAAVQNMDLMLSA.

Cys117 is an active-site residue.

This sequence belongs to the NAGSA dehydrogenase family. Type 2 subfamily.

The protein localises to the cytoplasm. It carries out the reaction N-acetyl-L-glutamate 5-semialdehyde + phosphate + NADP(+) = N-acetyl-L-glutamyl 5-phosphate + NADPH + H(+). The protein operates within amino-acid biosynthesis; L-arginine biosynthesis; N(2)-acetyl-L-ornithine from L-glutamate: step 3/4. Its function is as follows. Catalyzes the NADPH-dependent reduction of N-acetyl-5-glutamyl phosphate to yield N-acetyl-L-glutamate 5-semialdehyde. The chain is N-acetyl-gamma-glutamyl-phosphate reductase from Allorhizobium ampelinum (strain ATCC BAA-846 / DSM 112012 / S4) (Agrobacterium vitis (strain S4)).